Reading from the N-terminus, the 582-residue chain is La-related protein 7 (582 aa).

At Met1 the chain carries N-acetylmethionine. The tract at residues 1 to 27 is disordered; the sequence is METESGNQEKVMEEESTEKKKEVEKKK. Basic and acidic residues predominate over residues 10–25; the sequence is KVMEEESTEKKKEVEK. Positions 28–122 constitute an HTH La-type RNA-binding domain; that stretch reads RSRVKQVLAD…KPLGERPKDE (95 aa). In terms of domain architecture, RRM spans 125 to 203; that stretch reads RTVYVELLPK…PRKPGIFPKT (79 aa). Disordered stretches follow at residues 188–368 and 410–442; these read NPPE…ERHK and KSES…RTQE. A compositionally biased stretch (basic residues) spans 219 to 228; sequence KKKKKKKGRM. Basic and acidic residues predominate over residues 229 to 240; that stretch reads KKEDNIQAKEEN. Lys237 is covalently cross-linked (Glycyl lysine isopeptide (Lys-Gly) (interchain with G-Cter in SUMO2)). A Phosphothreonine modification is found at Thr257. Ser258, Ser261, Ser273, Ser298, Ser299, and Ser300 each carry phosphoserine. The segment covering 316-335 has biased composition (basic and acidic residues); it reads IQKDIIKEASEASKENRDIE. Ser337 is subject to Phosphoserine. Thr338 is modified (phosphothreonine). The residue at position 351 (Ser351) is a Phosphoserine. Over residues 354-367 the composition is skewed to basic residues; sequence KTKRKHKKKHKERH. Lys410 is covalently cross-linked (Glycyl lysine isopeptide (Lys-Gly) (interchain with G-Cter in SUMO2)). Residues 428–442 are compositionally biased toward basic and acidic residues; sequence KNEKTANREECRTQE. The 114-residue stretch at 450 to 563 folds into the xRRM domain; it reads QFVSGVIVKI…TEKLITKAEK (114 aa).

It belongs to the LARP7 family. As to quaternary structure, core component of the 7SK RNP complex, at least composed of 7SK RNA, LARP7, MEPCE, HEXIM1 (or HEXIM2) and P-TEFb (composed of CDK9 and CCNT1/cyclin-T1). Interacts with METTL16. Interacts with RBM7; upon genotoxic stress this interaction is enhanced, triggering the release of inactive P-TEFb complex from the core, yielding to P-TEFb complex activation. Associates with box C/D small nucleolar ribonucleoprotein (snoRNP) complexes.

The protein localises to the nucleus. Its subcellular location is the nucleoplasm. Functionally, RNA-binding protein that specifically binds distinct small nuclear RNA (snRNAs) and regulates their processing and function. Specifically binds the 7SK snRNA (7SK RNA) and acts as a core component of the 7SK ribonucleoprotein (RNP) complex, thereby acting as a negative regulator of transcription elongation by RNA polymerase II. The 7SK RNP complex sequesters the positive transcription elongation factor b (P-TEFb) in a large inactive 7SK RNP complex preventing RNA polymerase II phosphorylation and subsequent transcriptional elongation. The 7SK RNP complex also promotes snRNA gene transcription by RNA polymerase II via interaction with the little elongation complex (LEC). LARP7 specifically binds to the highly conserved 3'-terminal U-rich stretch of 7SK RNA; on stimulation, remains associated with 7SK RNA, whereas P-TEFb is released from the complex. LARP7 also acts as a regulator of mRNA splicing fidelity by promoting U6 snRNA processing. Specifically binds U6 snRNAs and associates with a subset of box C/D RNP complexes: promotes U6 snRNA 2'-O-methylation by facilitating U6 snRNA loading into box C/D RNP complexes. U6 snRNA 2'-O-methylation is required for mRNA splicing fidelity. Binds U6 snRNAs with a 5'-CAGGG-3' sequence motif. U6 snRNA processing is required for spermatogenesis. In Homo sapiens (Human), this protein is La-related protein 7.